The primary structure comprises 268 residues: Tryptophan synthase alpha chain (268 aa).

Residues Glu-40 and Asp-51 each act as proton acceptor in the active site.

The protein belongs to the TrpA family. Tetramer of two alpha and two beta chains.

It catalyses the reaction (1S,2R)-1-C-(indol-3-yl)glycerol 3-phosphate + L-serine = D-glyceraldehyde 3-phosphate + L-tryptophan + H2O. It participates in amino-acid biosynthesis; L-tryptophan biosynthesis; L-tryptophan from chorismate: step 5/5. Functionally, the alpha subunit is responsible for the aldol cleavage of indoleglycerol phosphate to indole and glyceraldehyde 3-phosphate. The polypeptide is Tryptophan synthase alpha chain (Geobacillus kaustophilus (strain HTA426)).